The chain runs to 357 residues: DNA replication and repair protein RecF (357 aa).

An ATP-binding site is contributed by 30–37; it reads GANGSGKT.

It belongs to the RecF family.

It localises to the cytoplasm. The RecF protein is involved in DNA metabolism; it is required for DNA replication and normal SOS inducibility. RecF binds preferentially to single-stranded, linear DNA. It also seems to bind ATP. The sequence is that of DNA replication and repair protein RecF from Escherichia coli O139:H28 (strain E24377A / ETEC).